The following is a 272-amino-acid chain: MTTPMKIAITGVSGRMGRMLVDTIDTSDAVTLSAALERPGHDWIGRDLGLALGGTERGVLVSDDIDSALADSEAVIDFTSPAATIRFAQAAARVGAIHVIGTTGMTEQEIAQIDAQAAGAVIVRAGNMSLGVNLLVQLTKRVAAALDEDFDIEVIESHHNQKVDAPSGTALMLGEAAAEGRGVSLDAVSDRGRDGLTGARQKGDIGFVSVRGGDIVGEHDVLFAAQGERITLRHVASDRSVFARGALKAALWARHRAPGAYDMLDVLGLKDG.

NAD(+)-binding positions include Gly-11–Met-16 and Glu-37. Position 38 (Arg-38) interacts with NADP(+). NAD(+) contacts are provided by residues Gly-101–Thr-103 and Ala-125–Met-128. The active-site Proton donor/acceptor is His-158. His-159 is a binding site for (S)-2,3,4,5-tetrahydrodipicolinate. Lys-162 functions as the Proton donor in the catalytic mechanism. A (S)-2,3,4,5-tetrahydrodipicolinate-binding site is contributed by Gly-168–Thr-169.

The protein belongs to the DapB family.

The protein localises to the cytoplasm. The enzyme catalyses (S)-2,3,4,5-tetrahydrodipicolinate + NAD(+) + H2O = (2S,4S)-4-hydroxy-2,3,4,5-tetrahydrodipicolinate + NADH + H(+). It carries out the reaction (S)-2,3,4,5-tetrahydrodipicolinate + NADP(+) + H2O = (2S,4S)-4-hydroxy-2,3,4,5-tetrahydrodipicolinate + NADPH + H(+). It participates in amino-acid biosynthesis; L-lysine biosynthesis via DAP pathway; (S)-tetrahydrodipicolinate from L-aspartate: step 4/4. In terms of biological role, catalyzes the conversion of 4-hydroxy-tetrahydrodipicolinate (HTPA) to tetrahydrodipicolinate. The sequence is that of 4-hydroxy-tetrahydrodipicolinate reductase from Roseobacter denitrificans (strain ATCC 33942 / OCh 114) (Erythrobacter sp. (strain OCh 114)).